The following is a 285-amino-acid chain: Non-structural protein ORF4b (285 aa).

The protein resides in the host nucleus. Its subcellular location is the host nucleolus. It localises to the host cytoplasm. Its function is as follows. Plays a role in the inhibition of host innate immunity by inhibiting the interaction between host IKBKE and MAVS. In turn, this inhibition prevents the production of host interferon beta. Additionally, may also interfere with host antiviral response within the nucleus. This Tylonycteris pachypus (Lesser bamboo bat) protein is Non-structural protein ORF4b (ORF4b).